A 414-amino-acid chain; its full sequence is MFSSESVTEGHPDKICDQISDAIVDALLTADPLSRVAAEVVVNTGLVLLTGEITSQAQVNFTRLVRDKVAEIGYTDAKNGFCAESCAVLVAFDEQSPDIAQGVNMALESRGSQEDQFDLVGAGDQGLMFGFACDETPELMPLPISLAHRLSRQLATVRKNGTLPYLRPDGKTQVTVAYEEGRPVGIHTLLISTQHTPTIGAITEEAAVQERIRADLWEAVVTPVFAELPIKPDSHTRFLTNPTGKFVIGGPQGDAGLTGRKIIVDTYGGYSRHGGGAFSGKDPTKVDRSAAYAARYVAKNIVAAGLAQKCEVQVSYAIGVARPINILVETFGTGRIPDEELLRLVQRHFDLRPAAILAQFQLRELPRQRGGRFYQNVAVYGHFGQTHLDLPWERTDKAALLREEALAKATALLA.

His-11 is a binding site for ATP. Asp-13 contributes to the Mg(2+) binding site. K(+) is bound at residue Glu-39. Residues Glu-52 and Gln-95 each coordinate L-methionine. Residues 95–105 (QSPDIAQGVNM) form a flexible loop region. Residues 169–171 (DGK), 245–246 (KF), Asp-254, 260–261 (RK), Ala-277, and Lys-281 contribute to the ATP site. Asp-254 is a binding site for L-methionine. Lys-285 lines the L-methionine pocket.

The protein belongs to the AdoMet synthase family. Homotetramer; dimer of dimers. It depends on Mg(2+) as a cofactor. K(+) is required as a cofactor.

The protein resides in the cytoplasm. It carries out the reaction L-methionine + ATP + H2O = S-adenosyl-L-methionine + phosphate + diphosphate. It functions in the pathway amino-acid biosynthesis; S-adenosyl-L-methionine biosynthesis; S-adenosyl-L-methionine from L-methionine: step 1/1. In terms of biological role, catalyzes the formation of S-adenosylmethionine (AdoMet) from methionine and ATP. The overall synthetic reaction is composed of two sequential steps, AdoMet formation and the subsequent tripolyphosphate hydrolysis which occurs prior to release of AdoMet from the enzyme. The chain is S-adenosylmethionine synthase from Synechococcus sp. (strain JA-2-3B'a(2-13)) (Cyanobacteria bacterium Yellowstone B-Prime).